A 103-amino-acid polypeptide reads, in one-letter code: Transcription factor S (103 aa).

C4, C7, C20, C23, C64, C67, C92, and C95 together coordinate Zn(2+). The segment at 4–23 (CPKCKSLMIYQGDKLVCRKC) adopts a C4-type zinc-finger fold. The TFIIS-type zinc finger occupies 60 to 100 (TKAICPACGHNEAFWWLRQLRAADESEVRFFRCTKCGKTWR).

The protein belongs to the archaeal RpoM/eukaryotic RPA12/RPB9/RPC11 RNA polymerase family.

Induces RNA cleavage activity in the RNA polymerase. In its presence, the cleavage activity of the RNA polymerase truncates the RNA back to position +15 in a stepwise manner by releasing mainly dinucleotides from the 3'-end of the nascent RNA. The truncated RNAs are able to continue elongation. Involved in transcriptional proofreading and fidelity. Misincorporation of nucleotides during elongation of transcription leads to arrested elongation complexes which are rescued by TFS-promoted removal of a dinucleotide from the 3'-end. TFS is able to induce a cleavage resynthesis cycle in stalled elongation complexes (resulting from the next missing nucleotide or a reduced incorporation rate of a wrong nucleotide) preventing misincorporation and enabling proofreading in a post-incorporation manner. Pausing of elongation complexes is the main determinant of TFS-induced RNA cleavage. The sequence is that of Transcription factor S from Archaeoglobus fulgidus (strain ATCC 49558 / DSM 4304 / JCM 9628 / NBRC 100126 / VC-16).